Here is a 354-residue protein sequence, read N- to C-terminus: Methionine import ATP-binding protein MetN (354 aa).

The ABC transporter domain occupies 8–250; the sequence is LDHIDITFRQ…PKEALTQKFI (243 aa). 42-49 serves as a coordination point for ATP; sequence GYSGAGKS.

This sequence belongs to the ABC transporter superfamily. Methionine importer (TC 3.A.1.24) family. As to quaternary structure, the complex is composed of two ATP-binding proteins (MetN), two transmembrane proteins (MetI) and a solute-binding protein (MetQ).

The protein localises to the cell membrane. It carries out the reaction L-methionine(out) + ATP + H2O = L-methionine(in) + ADP + phosphate + H(+). The catalysed reaction is D-methionine(out) + ATP + H2O = D-methionine(in) + ADP + phosphate + H(+). Its function is as follows. Part of the ABC transporter complex MetNIQ involved in methionine import. Responsible for energy coupling to the transport system. In Streptococcus pyogenes serotype M6 (strain ATCC BAA-946 / MGAS10394), this protein is Methionine import ATP-binding protein MetN.